An 878-amino-acid polypeptide reads, in one-letter code: Leucine--tRNA ligase (878 aa).

The span at 1-14 (MTASKSSSATASAS) shows a compositional bias: low complexity. The disordered stretch occupies residues 1–23 (MTASKSSSATASASDRPDRYDPI). Positions 58-68 (PYPSGSLHMGH) match the 'HIGH' region motif. The short motif at 632 to 636 (KMSKS) is the 'KMSKS' region element. Lysine 635 is a binding site for ATP.

Belongs to the class-I aminoacyl-tRNA synthetase family.

It localises to the cytoplasm. The enzyme catalyses tRNA(Leu) + L-leucine + ATP = L-leucyl-tRNA(Leu) + AMP + diphosphate. The chain is Leucine--tRNA ligase from Synechococcus sp. (strain WH7803).